Here is a 390-residue protein sequence, read N- to C-terminus: Probable protein phosphatase 2C 30 (390 aa).

Positions 1–10 are enriched in polar residues; it reads MQLSKNPIKQ. Disordered regions lie at residues 1–20 and 40–85; these read MQLSKNPIKQTRNREKNYTD and PPLV…DSET. Residues 44 to 61 are compositionally biased toward low complexity; sequence FSPTSVKTPLSSPRSSPP. The PPM-type phosphatase domain occupies 128–385; the sequence is YYSVYCKRGR…DDISLIIIQL (258 aa). The Mn(2+) site is built by Asp166, Gly167, Asp331, and Asp376.

This sequence belongs to the PP2C family. The cofactor is Mg(2+). Mn(2+) serves as cofactor.

The catalysed reaction is O-phospho-L-seryl-[protein] + H2O = L-seryl-[protein] + phosphate. It catalyses the reaction O-phospho-L-threonyl-[protein] + H2O = L-threonyl-[protein] + phosphate. The polypeptide is Probable protein phosphatase 2C 30 (PP2C5) (Arabidopsis thaliana (Mouse-ear cress)).